The primary structure comprises 241 residues: Uridylate kinase (241 aa).

An ATP-binding site is contributed by 15–18 (KLSG). An involved in allosteric activation by GTP region spans residues 23-28 (GTEGFG). Glycine 57 contributes to the UMP binding site. ATP contacts are provided by glycine 58 and arginine 62. UMP-binding positions include aspartate 77 and 138–145 (TGNPFFTT). Threonine 165, phenylalanine 171, and aspartate 174 together coordinate ATP.

This sequence belongs to the UMP kinase family. In terms of assembly, homohexamer.

The protein resides in the cytoplasm. The catalysed reaction is UMP + ATP = UDP + ADP. The protein operates within pyrimidine metabolism; CTP biosynthesis via de novo pathway; UDP from UMP (UMPK route): step 1/1. Its activity is regulated as follows. Allosterically activated by GTP. Inhibited by UTP. In terms of biological role, catalyzes the reversible phosphorylation of UMP to UDP. The protein is Uridylate kinase of Salmonella choleraesuis (strain SC-B67).